The primary structure comprises 350 residues: Protein RecA (350 aa).

Residue 65–72 coordinates ATP; it reads GPESSGKT.

This sequence belongs to the RecA family.

It localises to the cytoplasm. Its function is as follows. Can catalyze the hydrolysis of ATP in the presence of single-stranded DNA, the ATP-dependent uptake of single-stranded DNA by duplex DNA, and the ATP-dependent hybridization of homologous single-stranded DNAs. It interacts with LexA causing its activation and leading to its autocatalytic cleavage. In Clostridium tetani (strain Massachusetts / E88), this protein is Protein RecA.